A 183-amino-acid polypeptide reads, in one-letter code: Small ribosomal subunit protein bS16 (183 aa).

The segment covering 149–161 has biased composition (basic and acidic residues); it reads EKKAAEAAAKAEA. The segment at 149–183 is disordered; sequence EKKAAEAAAKAEAEAANAPAEEAPAAEATEAPAEA. Over residues 162-183 the composition is skewed to low complexity; sequence EAANAPAEEAPAAEATEAPAEA.

This sequence belongs to the bacterial ribosomal protein bS16 family.

This Phocaeicola vulgatus (strain ATCC 8482 / DSM 1447 / JCM 5826 / CCUG 4940 / NBRC 14291 / NCTC 11154) (Bacteroides vulgatus) protein is Small ribosomal subunit protein bS16.